Consider the following 89-residue polypeptide: Small ribosomal subunit protein uS15 (89 aa).

This sequence belongs to the universal ribosomal protein uS15 family. In terms of assembly, part of the 30S ribosomal subunit. Forms a bridge to the 50S subunit in the 70S ribosome, contacting the 23S rRNA.

One of the primary rRNA binding proteins, it binds directly to 16S rRNA where it helps nucleate assembly of the platform of the 30S subunit by binding and bridging several RNA helices of the 16S rRNA. Functionally, forms an intersubunit bridge (bridge B4) with the 23S rRNA of the 50S subunit in the ribosome. This is Small ribosomal subunit protein uS15 from Shewanella sp. (strain ANA-3).